Reading from the N-terminus, the 98-residue chain is Large ribosomal subunit protein bL28 (98 aa).

Part of the 50S ribosomal subunit.

The protein is Large ribosomal subunit protein bL28 (rpmB) of Thermus thermophilus (strain ATCC 27634 / DSM 579 / HB8).